Reading from the N-terminus, the 628-residue chain is Glutamyl-tRNA(Gln) amidotransferase subunit E (628 aa).

It belongs to the GatB/GatE family. GatE subfamily. In terms of assembly, heterodimer of GatD and GatE.

It carries out the reaction L-glutamyl-tRNA(Gln) + L-glutamine + ATP + H2O = L-glutaminyl-tRNA(Gln) + L-glutamate + ADP + phosphate + H(+). In terms of biological role, allows the formation of correctly charged Gln-tRNA(Gln) through the transamidation of misacylated Glu-tRNA(Gln) in organisms which lack glutaminyl-tRNA synthetase. The reaction takes place in the presence of glutamine and ATP through an activated gamma-phospho-Glu-tRNA(Gln). The GatDE system is specific for glutamate and does not act on aspartate. This chain is Glutamyl-tRNA(Gln) amidotransferase subunit E, found in Thermococcus gammatolerans (strain DSM 15229 / JCM 11827 / EJ3).